A 94-amino-acid polypeptide reads, in one-letter code: Large ribosomal subunit protein bL25 (94 aa).

Belongs to the bacterial ribosomal protein bL25 family. Part of the 50S ribosomal subunit; part of the 5S rRNA/L5/L18/L25 subcomplex. Contacts the 5S rRNA. Binds to the 5S rRNA independently of L5 and L18.

Functionally, this is one of the proteins that binds to the 5S RNA in the ribosome where it forms part of the central protuberance. This is Large ribosomal subunit protein bL25 from Escherichia coli O157:H7.